The chain runs to 514 residues: ATP synthase subunit alpha (514 aa).

ATP is bound at residue 170–177; sequence GDRQIGKT.

Belongs to the ATPase alpha/beta chains family. In terms of assembly, F-type ATPases have 2 components, CF(1) - the catalytic core - and CF(0) - the membrane proton channel. CF(1) has five subunits: alpha(3), beta(3), gamma(1), delta(1), epsilon(1). CF(0) has three main subunits: a(1), b(2) and c(9-12). The alpha and beta chains form an alternating ring which encloses part of the gamma chain. CF(1) is attached to CF(0) by a central stalk formed by the gamma and epsilon chains, while a peripheral stalk is formed by the delta and b chains.

It localises to the cell inner membrane. The enzyme catalyses ATP + H2O + 4 H(+)(in) = ADP + phosphate + 5 H(+)(out). In terms of biological role, produces ATP from ADP in the presence of a proton gradient across the membrane. The alpha chain is a regulatory subunit. The polypeptide is ATP synthase subunit alpha (Pseudomonas fluorescens (strain SBW25)).